We begin with the raw amino-acid sequence, 308 residues long: Acetyl-coenzyme A carboxylase carboxyl transferase subunit alpha (308 aa).

The CoA carboxyltransferase C-terminal domain maps to 36–286 (ELEKEVSSVY…ESYFLKAFEE (251 aa)).

It belongs to the AccA family. In terms of assembly, acetyl-CoA carboxylase is a heterohexamer composed of biotin carboxyl carrier protein (AccB), biotin carboxylase (AccC) and two subunits each of ACCase subunit alpha (AccA) and ACCase subunit beta (AccD).

It is found in the cytoplasm. The enzyme catalyses N(6)-carboxybiotinyl-L-lysyl-[protein] + acetyl-CoA = N(6)-biotinyl-L-lysyl-[protein] + malonyl-CoA. Its pathway is lipid metabolism; malonyl-CoA biosynthesis; malonyl-CoA from acetyl-CoA: step 1/1. Functionally, component of the acetyl coenzyme A carboxylase (ACC) complex. First, biotin carboxylase catalyzes the carboxylation of biotin on its carrier protein (BCCP) and then the CO(2) group is transferred by the carboxyltransferase to acetyl-CoA to form malonyl-CoA. In Helicobacter hepaticus (strain ATCC 51449 / 3B1), this protein is Acetyl-coenzyme A carboxylase carboxyl transferase subunit alpha.